A 363-amino-acid polypeptide reads, in one-letter code: Mannose-1-phosphate guanyltransferase (363 aa).

This sequence belongs to the transferase hexapeptide repeat family.

Its subcellular location is the cytoplasm. The catalysed reaction is alpha-D-mannose 1-phosphate + GTP + H(+) = GDP-alpha-D-mannose + diphosphate. It functions in the pathway nucleotide-sugar biosynthesis; GDP-alpha-D-mannose biosynthesis; GDP-alpha-D-mannose from alpha-D-mannose 1-phosphate (GTP route): step 1/1. Involved in cell wall synthesis where it is required for glycosylation. Involved in cell cycle progression through cell-size checkpoint. This chain is Mannose-1-phosphate guanyltransferase (MPG1), found in Yarrowia lipolytica (strain CLIB 122 / E 150) (Yeast).